The sequence spans 120 residues: Large ribosomal subunit protein bL19 (120 aa).

Belongs to the bacterial ribosomal protein bL19 family.

Functionally, this protein is located at the 30S-50S ribosomal subunit interface and may play a role in the structure and function of the aminoacyl-tRNA binding site. The polypeptide is Large ribosomal subunit protein bL19 (Trichormus variabilis (strain ATCC 29413 / PCC 7937) (Anabaena variabilis)).